Consider the following 188-residue polypeptide: NADH-quinone oxidoreductase subunit B 1 (188 aa).

[4Fe-4S] cluster-binding residues include Cys-39, Cys-40, Cys-105, and Cys-134.

The protein belongs to the complex I 20 kDa subunit family. In terms of assembly, NDH-1 is composed of 14 different subunits. Subunits NuoB, C, D, E, F, and G constitute the peripheral sector of the complex. [4Fe-4S] cluster is required as a cofactor.

The protein resides in the cell inner membrane. The enzyme catalyses a quinone + NADH + 5 H(+)(in) = a quinol + NAD(+) + 4 H(+)(out). In terms of biological role, NDH-1 shuttles electrons from NADH, via FMN and iron-sulfur (Fe-S) centers, to quinones in the respiratory chain. The immediate electron acceptor for the enzyme in this species is believed to be ubiquinone. Couples the redox reaction to proton translocation (for every two electrons transferred, four hydrogen ions are translocated across the cytoplasmic membrane), and thus conserves the redox energy in a proton gradient. The protein is NADH-quinone oxidoreductase subunit B 1 of Solibacter usitatus (strain Ellin6076).